Here is a 296-residue protein sequence, read N- to C-terminus: MLIGSHVSMSGKKMLQGSAEEAHKYGESTFMIYTGAPQNTRRKNIEDLNIEKGQQAMKTYGLSNIVVHAPYIINIANTTKPEVFNLGVDFLQKEIERTQALGAKDIVLHPGAHVGAGVDKGIQKIIEGLNEVLTHDNDVRIALETMAGKGTEVGRSFEEIAQIIDGVTHNDRLSVCFDTCHTHDAGYNVKEDFDGVLEKFDSIIGVDRIKVVHVNDSKNLRGAQKDRHENIGFGHIGFDALNYVVHHDTFKNIPKILETPYVGEDKKNKKPPYKLEIDMLKSQKFDPELKNKILTQ.

Residues His68, His109, Glu144, Asp178, His181, His213, Asp226, His228, and Glu258 each coordinate Zn(2+).

It belongs to the AP endonuclease 2 family. The cofactor is Zn(2+).

It carries out the reaction Endonucleolytic cleavage to 5'-phosphooligonucleotide end-products.. In terms of biological role, endonuclease IV plays a role in DNA repair. It cleaves phosphodiester bonds at apurinic or apyrimidinic (AP) sites, generating a 3'-hydroxyl group and a 5'-terminal sugar phosphate. The protein is Probable endonuclease 4 of Staphylococcus epidermidis (strain ATCC 35984 / DSM 28319 / BCRC 17069 / CCUG 31568 / BM 3577 / RP62A).